Consider the following 187-residue polypeptide: ATP synthase subunit b 2 (187 aa).

The span at 1–13 (MAESHATGTTTHT) shows a compositional bias: polar residues. The tract at residues 1–21 (MAESHATGTTTHTEVPHGKPE) is disordered. Residues 31–53 (ASQLVSFAIAFALLYVIVSRFAL) traverse the membrane as a helical segment.

The protein belongs to the ATPase B chain family. In terms of assembly, F-type ATPases have 2 components, F(1) - the catalytic core - and F(0) - the membrane proton channel. F(1) has five subunits: alpha(3), beta(3), gamma(1), delta(1), epsilon(1). F(0) has three main subunits: a(1), b(2) and c(10-14). The alpha and beta chains form an alternating ring which encloses part of the gamma chain. F(1) is attached to F(0) by a central stalk formed by the gamma and epsilon chains, while a peripheral stalk is formed by the delta and b chains.

The protein resides in the cell inner membrane. F(1)F(0) ATP synthase produces ATP from ADP in the presence of a proton or sodium gradient. F-type ATPases consist of two structural domains, F(1) containing the extramembraneous catalytic core and F(0) containing the membrane proton channel, linked together by a central stalk and a peripheral stalk. During catalysis, ATP synthesis in the catalytic domain of F(1) is coupled via a rotary mechanism of the central stalk subunits to proton translocation. Functionally, component of the F(0) channel, it forms part of the peripheral stalk, linking F(1) to F(0). The b'-subunit is a diverged and duplicated form of b found in plants and photosynthetic bacteria. This is ATP synthase subunit b 2 (atpF2) from Afipia carboxidovorans (strain ATCC 49405 / DSM 1227 / KCTC 32145 / OM5) (Oligotropha carboxidovorans).